Consider the following 285-residue polypeptide: Gap junction Cx32.2 protein (285 aa).

Residues 2 to 19 lie on the Cytoplasmic side of the membrane; sequence GDLGFLSKLLDQVQSHST. A helical membrane pass occupies residues 20–40; that stretch reads VIGKIWMTVLFLFRIMVLGAG. Topologically, residues 41-76 are extracellular; it reads AESVWGDEQSDFTCNTQQPGCENVCYDWTFPISHIR. Residues 77–99 form a helical membrane-spanning segment; the sequence is FWVLQIIFVSTPTLIYLGHAMHI. Residues 100–148 lie on the Cytoplasmic side of the membrane; the sequence is IQQETKLRARLSSPGGSRLCKQPKYTNEQGKVKIKGNLLGSYLTQLVFK. Residues 149–171 traverse the membrane as a helical segment; that stretch reads IIIEAAFIVGQYYLYGFIMVPMF. Topologically, residues 172-194 are extracellular; it reads PCSKKPCPFTVECYMSRPTEKTI. The helical transmembrane segment at 195–217 threads the bilayer; it reads FIIFMLVVACVSLLLNVIEVFYL. Over 218-285 the chain is Cytoplasmic; sequence ICTRVRCGSR…AKEEKRLLSH (68 aa). Residues 264 to 285 form a disordered region; sequence ETSQSIGGSLDGAKEEKRLLSH. Positions 275–285 are enriched in basic and acidic residues; sequence GAKEEKRLLSH.

Belongs to the connexin family. Beta-type (group I) subfamily. A connexon is composed of a hexamer of connexins.

The protein localises to the cell membrane. It is found in the cell junction. The protein resides in the gap junction. One gap junction consists of a cluster of closely packed pairs of transmembrane channels, the connexons, through which materials of low MW diffuse from one cell to a neighboring cell. May be involved in ovarian follicular maturation. This Micropogonias undulatus (Atlantic croaker) protein is Gap junction Cx32.2 protein.